A 190-amino-acid chain; its full sequence is Isopentenyl-diphosphate Delta-isomerase (190 aa).

Mn(2+) contacts are provided by H27 and H34. A Nudix hydrolase domain is found at 32-171 (PLHFAFSSYI…PFVFSPWMVD (140 aa)). C69 is a catalytic residue. C69 is a Mg(2+) binding site. H71 provides a ligand contact to Mn(2+). E89 is a binding site for Mg(2+). Residues E119 and E121 each contribute to the Mn(2+) site. The active site involves E121.

This sequence belongs to the IPP isomerase type 1 family. Mg(2+) serves as cofactor. Requires Mn(2+) as cofactor.

The protein localises to the cytoplasm. It catalyses the reaction isopentenyl diphosphate = dimethylallyl diphosphate. The protein operates within isoprenoid biosynthesis; dimethylallyl diphosphate biosynthesis; dimethylallyl diphosphate from isopentenyl diphosphate: step 1/1. Functionally, catalyzes the 1,3-allylic rearrangement of the homoallylic substrate isopentenyl (IPP) to its highly electrophilic allylic isomer, dimethylallyl diphosphate (DMAPP). In Corynebacterium efficiens (strain DSM 44549 / YS-314 / AJ 12310 / JCM 11189 / NBRC 100395), this protein is Isopentenyl-diphosphate Delta-isomerase.